A 174-amino-acid chain; its full sequence is Crossover junction endodeoxyribonuclease RuvC (174 aa).

Active-site residues include Asp8, Glu69, and Asp141. The Mg(2+) site is built by Asp8, Glu69, and Asp141.

The protein belongs to the RuvC family. Homodimer which binds Holliday junction (HJ) DNA. The HJ becomes 2-fold symmetrical on binding to RuvC with unstacked arms; it has a different conformation from HJ DNA in complex with RuvA. In the full resolvosome a probable DNA-RuvA(4)-RuvB(12)-RuvC(2) complex forms which resolves the HJ. The cofactor is Mg(2+).

The protein localises to the cytoplasm. The catalysed reaction is Endonucleolytic cleavage at a junction such as a reciprocal single-stranded crossover between two homologous DNA duplexes (Holliday junction).. The RuvA-RuvB-RuvC complex processes Holliday junction (HJ) DNA during genetic recombination and DNA repair. Endonuclease that resolves HJ intermediates. Cleaves cruciform DNA by making single-stranded nicks across the HJ at symmetrical positions within the homologous arms, yielding a 5'-phosphate and a 3'-hydroxyl group; requires a central core of homology in the junction. The consensus cleavage sequence is 5'-(A/T)TT(C/G)-3'. Cleavage occurs on the 3'-side of the TT dinucleotide at the point of strand exchange. HJ branch migration catalyzed by RuvA-RuvB allows RuvC to scan DNA until it finds its consensus sequence, where it cleaves and resolves the cruciform DNA. The polypeptide is Crossover junction endodeoxyribonuclease RuvC (Xanthomonas oryzae pv. oryzae (strain PXO99A)).